The sequence spans 1464 residues: Gag-Pol polyprotein (1464 aa).

Gly-2 carries N-myristoyl glycine; by host lipidation. The interval 7 to 31 is interaction with Gp41; that stretch reads VLRGKKADELERIRLRPGGKKKYRL. The Nuclear export signal signature appears at 16-22; the sequence is LERIRLR. Positions 26-32 match the Nuclear localization signal motif; it reads KKKYRLK. The segment at 111–136 is disordered; that stretch reads ETGTAEKMPSTSRPTAPSSEKGGNYP. The segment covering 119–128 has biased composition (polar residues); that stretch reads PSTSRPTAPS. The residue at position 135 (Tyr-135) is a Phosphotyrosine; by host. An interaction with human PPIA/CYPA and NUP153 region spans residues 191-228; sequence NCVGDHQAAMQIIREIINEEAAEWDVQHPIPGPLPAGQ. The dimerization/Multimerization of capsid protein p24 stretch occupies residues 279 to 365; sequence YNPTNILDIK…GGPGQKARLM (87 aa). CCHC-type zinc fingers lie at residues 389–406 and 410–427; these read FKCW…QCRA and QGCW…NCPD. The tract at residues 432 to 500 is disordered; that stretch reads FLRTGPLGKE…RGLTAPRAGG (69 aa). The segment covering 456 to 469 has biased composition (low complexity); it reads TNSTPSGSSSGSTG. A compositionally biased stretch (basic and acidic residues) spans 473–485; the sequence is AAREKTERAERET. Positions 514–518 are dimerization of protease; it reads PQFSL. The region spanning 533–602 is the Peptidase A2 domain; sequence VEVLLDTGAD…TPINIFGRNI (70 aa). Asp-538 (for protease activity; shared with dimeric partner) is an active-site residue. 2 dimerization of protease regions span residues 562-568 and 601-613; these read GIGGFIN and NILT…LNLP. Residues 656-846 form the Reverse transcriptase domain; the sequence is EGQLEEAPPT…PPYHWMGYEL (191 aa). 3 residues coordinate Mg(2+): Asp-722, Asp-797, and Asp-798. The segment at 839-847 is RT 'primer grip'; the sequence is YHWMGYELW. The Tryptophan repeat motif signature appears at 1009 to 1025; the sequence is WEQWWDNYWQVTWIPDW. In terms of domain architecture, RNase H type-1 spans 1045–1168; that stretch reads IPGAETFYTD…VDHLVSQGIR (124 aa). 4 residues coordinate Mg(2+): Asp-1054, Glu-1089, Asp-1109, and Asp-1160. Residues 1174 to 1215 form an Integrase-type zinc finger; the sequence is EKIEPAQEEHEKYHSNVKELSHKFGIPNLVARQIVNSCAQCQ. Zn(2+) contacts are provided by His-1183, His-1187, Cys-1211, and Cys-1214. The region spanning 1224 to 1375 is the Integrase catalytic domain; it reads QVNAELGTWQ…TPSERLINMI (152 aa). Positions 1235, 1287, and 1323 each coordinate Mg(2+). Residues 1394–1441 constitute a DNA-binding region (integrase-type); the sequence is FRVYFREGRDQLWKGPGELLWKGEGAVLVKVGTDIKIIPRRKAKIIRD.

Homotrimer; further assembles as hexamers of trimers. Interacts with gp41 (via C-terminus). Interacts with host CALM1; this interaction induces a conformational change in the Matrix protein, triggering exposure of the myristate group. Interacts with host AP3D1; this interaction allows the polyprotein trafficking to multivesicular bodies during virus assembly. Part of the pre-integration complex (PIC) which is composed of viral genome, matrix protein, Vpr and integrase. As to quaternary structure, homodimer; the homodimer further multimerizes as homohexamers or homopentamers. Interacts with human PPIA/CYPA. Interacts with human NUP153. Interacts with host PDZD8; this interaction stabilizes the capsid. Interacts with monkey TRIM5; this interaction destabilizes the capsid. In terms of assembly, homodimer, whose active site consists of two apposed aspartic acid residues. Heterodimer of p66 RT and p51 RT (RT p66/p51). Heterodimerization of RT is essential for DNA polymerase activity. The overall folding of the subdomains is similar in p66 RT and p51 RT but the spatial arrangements of the subdomains are dramatically different. As to quaternary structure, homotetramer; may further associate as a homohexadecamer. Part of the pre-integration complex (PIC) which is composed of viral genome, matrix protein, Vpr and integrase. Interacts with human SMARCB1/INI1 and human PSIP1/LEDGF isoform 1. Interacts with human KPNA3; this interaction might play a role in nuclear import of the pre-integration complex. Interacts with human NUP153; this interaction might play a role in nuclear import of the pre-integration complex. It depends on Mg(2+) as a cofactor. Specific enzymatic cleavages by the viral protease yield mature proteins. The protease is released by autocatalytic cleavage. The polyprotein is cleaved during and after budding, this process is termed maturation. Proteolytic cleavage of p66 RT removes the RNase H domain to yield the p51 RT subunit. Nucleocapsid protein p7 might be further cleaved after virus entry.

It is found in the host cell membrane. The protein resides in the host endosome. Its subcellular location is the host multivesicular body. It localises to the virion membrane. The protein localises to the host nucleus. It is found in the host cytoplasm. The protein resides in the virion. The enzyme catalyses Endopeptidase for which the P1 residue is preferably hydrophobic.. It catalyses the reaction Endohydrolysis of RNA in RNA/DNA hybrids. Three different cleavage modes: 1. sequence-specific internal cleavage of RNA. Human immunodeficiency virus type 1 and Moloney murine leukemia virus enzymes prefer to cleave the RNA strand one nucleotide away from the RNA-DNA junction. 2. RNA 5'-end directed cleavage 13-19 nucleotides from the RNA end. 3. DNA 3'-end directed cleavage 15-20 nucleotides away from the primer terminus.. The catalysed reaction is 3'-end directed exonucleolytic cleavage of viral RNA-DNA hybrid.. It carries out the reaction DNA(n) + a 2'-deoxyribonucleoside 5'-triphosphate = DNA(n+1) + diphosphate. Protease: The viral protease is inhibited by many synthetic protease inhibitors (PIs), such as amprenavir, atazanavir, indinavir, loprinavir, nelfinavir, ritonavir and saquinavir. Use of protease inhibitors in tritherapy regimens permit more ambitious therapeutic strategies. Reverse transcriptase/ribonuclease H: RT can be inhibited either by nucleoside RT inhibitors (NRTIs) or by non nucleoside RT inhibitors (NNRTIs). NRTIs act as chain terminators, whereas NNRTIs inhibit DNA polymerization by binding a small hydrophobic pocket near the RT active site and inducing an allosteric change in this region. Classical NRTIs are abacavir, adefovir (PMEA), didanosine (ddI), lamivudine (3TC), stavudine (d4T), tenofovir (PMPA), zalcitabine (ddC), and zidovudine (AZT). Classical NNRTIs are atevirdine (BHAP U-87201E), delavirdine, efavirenz (DMP-266), emivirine (I-EBU), and nevirapine (BI-RG-587). The tritherapies used as a basic effective treatment of AIDS associate two NRTIs and one NNRTI. Mediates, with Gag polyprotein, the essential events in virion assembly, including binding the plasma membrane, making the protein-protein interactions necessary to create spherical particles, recruiting the viral Env proteins, and packaging the genomic RNA via direct interactions with the RNA packaging sequence (Psi). Gag-Pol polyprotein may regulate its own translation, by the binding genomic RNA in the 5'-UTR. At low concentration, the polyprotein would promote translation, whereas at high concentration, the polyprotein would encapsidate genomic RNA and then shut off translation. Its function is as follows. Targets the polyprotein to the plasma membrane via a multipartite membrane-binding signal, that includes its myristoylated N-terminus. Matrix protein is part of the pre-integration complex. Implicated in the release from host cell mediated by Vpu. Binds to RNA. In terms of biological role, forms the conical core that encapsulates the genomic RNA-nucleocapsid complex in the virion. Most core are conical, with only 7% tubular. The core is constituted by capsid protein hexamer subunits. The core is disassembled soon after virion entry. Host restriction factors such as TRIM5-alpha or TRIMCyp bind retroviral capsids and cause premature capsid disassembly, leading to blocks in reverse transcription. Capsid restriction by TRIM5 is one of the factors which restricts HIV-1 to the human species. Host PIN1 apparently facilitates the virion uncoating. On the other hand, interactions with PDZD8 or CYPA stabilize the capsid. Functionally, encapsulates and protects viral dimeric unspliced genomic RNA (gRNA). Binds these RNAs through its zinc fingers. Acts as a nucleic acid chaperone which is involved in rearangement of nucleic acid secondary structure during gRNA retrotranscription. Also facilitates template switch leading to recombination. As part of the polyprotein, participates in gRNA dimerization, packaging, tRNA incorporation and virion assembly. Aspartyl protease that mediates proteolytic cleavages of Gag and Gag-Pol polyproteins during or shortly after the release of the virion from the plasma membrane. Cleavages take place as an ordered, step-wise cascade to yield mature proteins. This process is called maturation. Displays maximal activity during the budding process just prior to particle release from the cell. Also cleaves Nef and Vif, probably concomitantly with viral structural proteins on maturation of virus particles. Hydrolyzes host EIF4GI and PABP1 in order to shut off the capped cellular mRNA translation. The resulting inhibition of cellular protein synthesis serves to ensure maximal viral gene expression and to evade host immune response. Its function is as follows. Multifunctional enzyme that converts the viral RNA genome into dsDNA in the cytoplasm, shortly after virus entry into the cell. This enzyme displays a DNA polymerase activity that can copy either DNA or RNA templates, and a ribonuclease H (RNase H) activity that cleaves the RNA strand of RNA-DNA heteroduplexes in a partially processive 3' to 5' endonucleasic mode. Conversion of viral genomic RNA into dsDNA requires many steps. A tRNA(3)-Lys binds to the primer-binding site (PBS) situated at the 5'-end of the viral RNA. RT uses the 3' end of the tRNA primer to perform a short round of RNA-dependent minus-strand DNA synthesis. The reading proceeds through the U5 region and ends after the repeated (R) region which is present at both ends of viral RNA. The portion of the RNA-DNA heteroduplex is digested by the RNase H, resulting in a ssDNA product attached to the tRNA primer. This ssDNA/tRNA hybridizes with the identical R region situated at the 3' end of viral RNA. This template exchange, known as minus-strand DNA strong stop transfer, can be either intra- or intermolecular. RT uses the 3' end of this newly synthesized short ssDNA to perform the RNA-dependent minus-strand DNA synthesis of the whole template. RNase H digests the RNA template except for two polypurine tracts (PPTs) situated at the 5'-end and near the center of the genome. It is not clear if both polymerase and RNase H activities are simultaneous. RNase H probably can proceed both in a polymerase-dependent (RNA cut into small fragments by the same RT performing DNA synthesis) and a polymerase-independent mode (cleavage of remaining RNA fragments by free RTs). Secondly, RT performs DNA-directed plus-strand DNA synthesis using the PPTs that have not been removed by RNase H as primers. PPTs and tRNA primers are then removed by RNase H. The 3' and 5' ssDNA PBS regions hybridize to form a circular dsDNA intermediate. Strand displacement synthesis by RT to the PBS and PPT ends produces a blunt ended, linear dsDNA copy of the viral genome that includes long terminal repeats (LTRs) at both ends. In terms of biological role, catalyzes viral DNA integration into the host chromosome, by performing a series of DNA cutting and joining reactions. This enzyme activity takes place after virion entry into a cell and reverse transcription of the RNA genome in dsDNA. The first step in the integration process is 3' processing. This step requires a complex comprising the viral genome, matrix protein, Vpr and integrase. This complex is called the pre-integration complex (PIC). The integrase protein removes 2 nucleotides from each 3' end of the viral DNA, leaving recessed CA OH's at the 3' ends. In the second step, the PIC enters cell nucleus. This process is mediated through integrase and Vpr proteins, and allows the virus to infect a non dividing cell. This ability to enter the nucleus is specific of lentiviruses, other retroviruses cannot and rely on cell division to access cell chromosomes. In the third step, termed strand transfer, the integrase protein joins the previously processed 3' ends to the 5' ends of strands of target cellular DNA at the site of integration. The 5'-ends are produced by integrase-catalyzed staggered cuts, 5 bp apart. A Y-shaped, gapped, recombination intermediate results, with the 5'-ends of the viral DNA strands and the 3' ends of target DNA strands remaining unjoined, flanking a gap of 5 bp. The last step is viral DNA integration into host chromosome. This involves host DNA repair synthesis in which the 5 bp gaps between the unjoined strands are filled in and then ligated. Since this process occurs at both cuts flanking the HIV genome, a 5 bp duplication of host DNA is produced at the ends of HIV-1 integration. Alternatively, Integrase may catalyze the excision of viral DNA just after strand transfer, this is termed disintegration. This chain is Gag-Pol polyprotein (gag-pol), found in Homo sapiens (Human).